Reading from the N-terminus, the 82-residue chain is M-zodatoxin-Lt3a (82 aa).

The signal sequence occupies residues 1–22 (MKTYAVLLALVVAFVCIAESTG). A propeptide spanning residues 23–61 (YPVEDLEDDELTELEAEALLEDLLEDLELEDLDYNEEAR) is cleaved from the precursor. The short motif at 58–61 (EEAR) is the Processing quadruplet motif element. Ala-81 carries the post-translational modification Alanine amide.

Belongs to the cationic peptide 03 (latarcin) family. 03 subfamily. Post-translationally, cleavage of the propeptide depends on the processing quadruplet motif (XXXR, with at least one of X being E). In terms of tissue distribution, expressed by the venom gland.

The protein resides in the secreted. The protein localises to the target cell membrane. Functionally, it has antimicrobial activity against Gram-positive bacteria (A.globiformis VKM Ac-1112 (MIC=0.3 uM), and B.subtilis VKM B-501 (MIC=1.2 uM)), Gram-negative bacteria (E.coli DH5-alpha (MIC=2.5 uM), E.coli MH1 (MIC=6.0 uM), and P.aeruginosa PAO1 (MIC&gt;40 uM)), and yeasts (P.pastoris GS115 (MIC=20 uM), and S.cerevisiae Y190 (MIC=20 uM)). Causes paralysis, but is not lethal when injected into insect (M.domestica) larvae. A second study reports antibacterial activity against E.coli (MIC=100 uM) and S.aureus (MIC=84 uM). Furthermore, increases efficacy of antibiotics (chloramphenicol, streptomycin, kanamycin, novobiocin) when tested against E.coli, probably by facilitating their incorporation into the bacteria. This Lachesana tarabaevi (Spider) protein is M-zodatoxin-Lt3a.